Consider the following 289-residue polypeptide: MPELPEVEVVRRGLERHIVGASIDSVDILHPRAIRRHLPGAADLAGQLTGERIAGADRRGKYLWLVLEPSTVALVVHLGMSGQMLVQPPELPTEKHLRIRARLDSGLDLRFVDQRTFGGWALAPLVEVDGSLVPDSVAHIARDPLDSRFDLAATVKVVRGKHSEIKRVLLDQTVVSGIGNIYADEALWRAQIHGNRLTDRLTGPRIGAVLTAAQQVMREALSQGGTSFDALYVNVNGESGYFDRSLSAYGQEDRPCPRCGTAIRREKFMNRSSFSCPKCQRAPRRSPAR.

The active-site Schiff-base intermediate with DNA is the proline 2. Catalysis depends on glutamate 3, which acts as the Proton donor. The Proton donor; for beta-elimination activity role is filled by lysine 61. 3 residues coordinate DNA: histidine 96, arginine 115, and lysine 161. The FPG-type zinc finger occupies 247-281; it reads SAYGQEDRPCPRCGTAIRREKFMNRSSFSCPKCQR. Arginine 271 acts as the Proton donor; for delta-elimination activity in catalysis.

This sequence belongs to the FPG family. As to quaternary structure, monomer. It depends on Zn(2+) as a cofactor.

It catalyses the reaction Hydrolysis of DNA containing ring-opened 7-methylguanine residues, releasing 2,6-diamino-4-hydroxy-5-(N-methyl)formamidopyrimidine.. It carries out the reaction 2'-deoxyribonucleotide-(2'-deoxyribose 5'-phosphate)-2'-deoxyribonucleotide-DNA = a 3'-end 2'-deoxyribonucleotide-(2,3-dehydro-2,3-deoxyribose 5'-phosphate)-DNA + a 5'-end 5'-phospho-2'-deoxyribonucleoside-DNA + H(+). In terms of biological role, involved in base excision repair of DNA damaged by oxidation or by mutagenic agents. Acts as a DNA glycosylase that recognizes and removes damaged bases. Has a preference for oxidized purines, such as 7,8-dihydro-8-oxoguanine (8-oxoG). Has AP (apurinic/apyrimidinic) lyase activity and introduces nicks in the DNA strand. Cleaves the DNA backbone by beta-delta elimination to generate a single-strand break at the site of the removed base with both 3'- and 5'-phosphates. The protein is Formamidopyrimidine-DNA glycosylase of Rhodococcus opacus (strain B4).